Consider the following 487-residue polypeptide: GTPase Der (487 aa).

EngA-type G domains follow at residues 3-166 (PVIA…PRDA) and 193-366 (IKIA…KSAV). Residues 9 to 16 (GRPNVGKS), 56 to 60 (DTGGI), 118 to 121 (NKID), 199 to 206 (GRPNVGKS), 246 to 250 (DTAGV), and 311 to 314 (NKWD) contribute to the GTP site. The KH-like domain occupies 367 to 451 (TRWPTSRLTQ…PIRIEYKGGE (85 aa)). Over residues 449 to 461 (GGENPFEGKKNTL) the composition is skewed to basic and acidic residues. The segment at 449–487 (GGENPFEGKKNTLTDRQVNKKRRLMSHHKKAEKKRRDKR) is disordered. Over residues 467-487 (NKKRRLMSHHKKAEKKRRDKR) the composition is skewed to basic residues.

It belongs to the TRAFAC class TrmE-Era-EngA-EngB-Septin-like GTPase superfamily. EngA (Der) GTPase family. Associates with the 50S ribosomal subunit.

In terms of biological role, GTPase that plays an essential role in the late steps of ribosome biogenesis. This is GTPase Der from Pseudomonas putida (strain GB-1).